Here is a 299-residue protein sequence, read N- to C-terminus: Tyrosine recombinase XerC (299 aa).

The region spanning 1 to 85 (MERQLDAYCE…AVRGLYHYLN (85 aa)) is the Core-binding (CB) domain. Residues 106–285 (RLPKTLDTDR…DFQHLATVYD (180 aa)) enclose the Tyr recombinase domain. Active-site residues include Arg-146, Lys-170, His-237, Arg-240, and His-263. The active-site O-(3'-phospho-DNA)-tyrosine intermediate is the Tyr-272.

It belongs to the 'phage' integrase family. XerC subfamily. As to quaternary structure, forms a cyclic heterotetrameric complex composed of two molecules of XerC and two molecules of XerD.

It is found in the cytoplasm. In terms of biological role, site-specific tyrosine recombinase, which acts by catalyzing the cutting and rejoining of the recombining DNA molecules. The XerC-XerD complex is essential to convert dimers of the bacterial chromosome into monomers to permit their segregation at cell division. It also contributes to the segregational stability of plasmids. The chain is Tyrosine recombinase XerC from Pseudomonas fluorescens.